The chain runs to 143 residues: Large ribosomal subunit protein uL15 (143 aa).

Residues 1 to 54 (MQLNSIKPAPGAKHPKRRVGRGIGSGLGKTAGRGHKGQKSRAGGFHKVGFEGGQ) form a disordered region. Residues 21-31 (RGIGSGLGKTA) show a composition bias toward gly residues.

It belongs to the universal ribosomal protein uL15 family. As to quaternary structure, part of the 50S ribosomal subunit.

Binds to the 23S rRNA. The chain is Large ribosomal subunit protein uL15 from Nitrosospira multiformis (strain ATCC 25196 / NCIMB 11849 / C 71).